Reading from the N-terminus, the 194-residue chain is Imidazoleglycerol-phosphate dehydratase (194 aa).

The protein belongs to the imidazoleglycerol-phosphate dehydratase family.

The protein resides in the cytoplasm. The enzyme catalyses D-erythro-1-(imidazol-4-yl)glycerol 3-phosphate = 3-(imidazol-4-yl)-2-oxopropyl phosphate + H2O. The protein operates within amino-acid biosynthesis; L-histidine biosynthesis; L-histidine from 5-phospho-alpha-D-ribose 1-diphosphate: step 6/9. This chain is Imidazoleglycerol-phosphate dehydratase, found in Oceanobacillus iheyensis (strain DSM 14371 / CIP 107618 / JCM 11309 / KCTC 3954 / HTE831).